A 713-amino-acid polypeptide reads, in one-letter code: Polyribonucleotide nucleotidyltransferase (713 aa).

Aspartate 488 and aspartate 494 together coordinate Mg(2+). The 60-residue stretch at 555-614 (PRIEVMNIPTDKIRDVIGSGGKVIREIVEKTGAKINIEDDGTVKIASSNGKEIEAAKKWI) folds into the KH domain. Positions 624-692 (GEIYEGTVVK…ERGKVRLSMK (69 aa)) constitute an S1 motif domain.

This sequence belongs to the polyribonucleotide nucleotidyltransferase family. Requires Mg(2+) as cofactor.

It localises to the cytoplasm. The catalysed reaction is RNA(n+1) + phosphate = RNA(n) + a ribonucleoside 5'-diphosphate. Involved in mRNA degradation. Catalyzes the phosphorolysis of single-stranded polyribonucleotides processively in the 3'- to 5'-direction. This Brucella anthropi (strain ATCC 49188 / DSM 6882 / CCUG 24695 / JCM 21032 / LMG 3331 / NBRC 15819 / NCTC 12168 / Alc 37) (Ochrobactrum anthropi) protein is Polyribonucleotide nucleotidyltransferase.